We begin with the raw amino-acid sequence, 188 residues long: Protein GrpE 2 (188 aa).

The protein belongs to the GrpE family. As to quaternary structure, homodimer.

The protein resides in the cytoplasm. Participates actively in the response to hyperosmotic and heat shock by preventing the aggregation of stress-denatured proteins, in association with DnaK and GrpE. It is the nucleotide exchange factor for DnaK and may function as a thermosensor. Unfolded proteins bind initially to DnaJ; upon interaction with the DnaJ-bound protein, DnaK hydrolyzes its bound ATP, resulting in the formation of a stable complex. GrpE releases ADP from DnaK; ATP binding to DnaK triggers the release of the substrate protein, thus completing the reaction cycle. Several rounds of ATP-dependent interactions between DnaJ, DnaK and GrpE are required for fully efficient folding. This chain is Protein GrpE 2, found in Buchnera aphidicola subsp. Acyrthosiphon pisum (strain APS) (Acyrthosiphon pisum symbiotic bacterium).